A 130-amino-acid polypeptide reads, in one-letter code: Sec-independent protein translocase protein TatB (130 aa).

Residues 1–21 traverse the membrane as a helical segment; it reads MFDIGFWELVLIFVVGLVVLG. Positions 85 to 130 are disordered; sequence LKQAAQSVNRPYADVSAKNEATSSSSSDATHQTEATKTSAANTKSE. Over residues 112-130 the composition is skewed to polar residues; it reads DATHQTEATKTSAANTKSE.

The protein belongs to the TatB family. The Tat system comprises two distinct complexes: a TatABC complex, containing multiple copies of TatA, TatB and TatC subunits, and a separate TatA complex, containing only TatA subunits. Substrates initially bind to the TatABC complex, which probably triggers association of the separate TatA complex to form the active translocon.

It is found in the cell inner membrane. Its function is as follows. Part of the twin-arginine translocation (Tat) system that transports large folded proteins containing a characteristic twin-arginine motif in their signal peptide across membranes. Together with TatC, TatB is part of a receptor directly interacting with Tat signal peptides. TatB may form an oligomeric binding site that transiently accommodates folded Tat precursor proteins before their translocation. This chain is Sec-independent protein translocase protein TatB, found in Vibrio vulnificus (strain CMCP6).